The primary structure comprises 285 residues: Taffazin (285 aa).

At 1–23 (MDSNNSNNNNKNLKQICDIPKPQ) the chain is on the mitochondrial intermembrane side. Residues 24-42 (FLSKGVFTLVGVLCKFWIS) lie within the membrane without spanning it. The Mitochondrial intermembrane portion of the chain corresponds to 43-285 (MNTVTTSGID…GRFSHPTIKD (243 aa)). The HXXXXD motif motif lies at 74 to 79 (HSSNLD).

It belongs to the taffazin family.

The protein resides in the mitochondrion outer membrane. It localises to the mitochondrion inner membrane. The enzyme catalyses a 1-acyl-sn-glycero-3-phosphate + a 1,2-diacyl-sn-glycero-3-phospho-(1'-sn-glycerol) = 1-acyl-sn-glycero-3-phospho-(1'-sn-glycerol) + a 1,2-diacyl-sn-glycero-3-phosphate. It carries out the reaction 1-hexadecanoyl-2-(9Z,12Z-octadecadienoyl)-sn-glycero-3-phospho-(1'-sn-glycerol) + 1-(9Z-octadecenoyl)-sn-glycero-3-phosphate = 1-(9Z)-octadecenoyl-2-(9Z,12Z)-octadecadienoyl-sn-glycero-3-phosphate + 1-hexadecanoyl-sn-glycero-3-phospho-(1'-sn-glycerol). It catalyses the reaction 1'-[1,2-diacyl-sn-glycero-3-phospho],3'-[1-acyl-sn-glycero-3-phospho]-glycerol + a 1,2-diacyl-sn-glycero-3-phosphocholine = a cardiolipin + a 1-acyl-sn-glycero-3-phosphocholine. The catalysed reaction is 1-hexadecanoyl-2-(9Z,12Z-octadecadienoyl)-sn-glycero-3-phosphocholine + 1-hexadecanoyl-sn-glycero-3-phosphocholine = 2-(9Z,12Z-octadecadienoyl)-sn-glycero-3-phosphocholine + 1,2-dihexadecanoyl-sn-glycero-3-phosphocholine. The enzyme catalyses 1,2-di-(9Z-octadecenoyl)-sn-glycero-3-phosphocholine + 1-hexadecanoyl-sn-glycero-3-phosphocholine = 1-hexadecanoyl-2-(9Z-octadecenoyl)-sn-glycero-3-phosphocholine + 1-(9Z-octadecenoyl)-sn-glycero-3-phosphocholine. It functions in the pathway phospholipid metabolism. Acyltransferase required to remodel newly synthesized phospholipid cardiolipin (1',3'-bis-[1,2-diacyl-sn-glycero-3-phospho]-glycerol or CL), a key component of the mitochondrial inner membrane, with tissue specific acyl chains necessary for adequate mitochondrial function. Its role in cellular physiology is to improve mitochondrial performance. CL is critical for the coassembly of lipids and proteins in mitochondrial membranes, for instance, remodeling of the acyl groups of CL in the mitochondrial inner membrane affects the assembly and stability of respiratory chain complex IV and its supercomplex forms. Catalyzes the transacylation between phospholipids and lysophospholipids, with the highest rate being between phosphatidylcholine (1,2-diacyl-sn-glycero-3-phosphocholine or PC) and CL. Catalyzes both 1-acyl-sn-glycero-3-phosphocholine (lysophosphatidylcholine or LPC) reacylation and PC-CL transacylation, that means, it exchanges acyl groups between CL and PC by a combination of forward and reverse transacylations. Also catalyzes transacylations between other phospholipids such as phosphatidylethanolamine (1,2-diacyl-sn-glycero-3-phosphoethanolamine or PE) and CL, between PC and PE, and between PC and phosphatidate (1,2-diacyl-sn-glycero-3-phosphate or PA), although at lower rate. Not regiospecific, it transfers acyl groups into any of the sn-1 and sn-2 positions of the monolysocardiolipin (MLCL), which is an important prerequisite for uniformity and symmetry in CL acyl distribution. Cannot transacylate dilysocardiolipin (DLCL), thus, the role of MLCL is limited to that of an acyl acceptor. CoA-independent, it can reshuffle molecular species within a single phospholipid class. Redistributes fatty acids between MLCL, CL, and other lipids, which prolongs the half-life of CL. Its action is completely reversible, which allows for cyclic changes, such as fission and fusion or bending and flattening of the membrane. Hence, by contributing to the flexibility of the lipid composition, it plays an important role in the dynamics of mitochondria membranes. The polypeptide is Taffazin (taz) (Dictyostelium discoideum (Social amoeba)).